The sequence spans 568 residues: Proline--tRNA ligase (568 aa).

Belongs to the class-II aminoacyl-tRNA synthetase family. ProS type 1 subfamily. Homodimer.

It is found in the cytoplasm. It catalyses the reaction tRNA(Pro) + L-proline + ATP = L-prolyl-tRNA(Pro) + AMP + diphosphate. In terms of biological role, catalyzes the attachment of proline to tRNA(Pro) in a two-step reaction: proline is first activated by ATP to form Pro-AMP and then transferred to the acceptor end of tRNA(Pro). As ProRS can inadvertently accommodate and process non-cognate amino acids such as alanine and cysteine, to avoid such errors it has two additional distinct editing activities against alanine. One activity is designated as 'pretransfer' editing and involves the tRNA(Pro)-independent hydrolysis of activated Ala-AMP. The other activity is designated 'posttransfer' editing and involves deacylation of mischarged Ala-tRNA(Pro). The misacylated Cys-tRNA(Pro) is not edited by ProRS. The polypeptide is Proline--tRNA ligase (Chromobacterium violaceum (strain ATCC 12472 / DSM 30191 / JCM 1249 / CCUG 213 / NBRC 12614 / NCIMB 9131 / NCTC 9757 / MK)).